The chain runs to 897 residues: DNA mismatch repair protein MutS (897 aa).

Position 654-661 (Gly-654–Ser-661) interacts with ATP.

The protein belongs to the DNA mismatch repair MutS family.

This protein is involved in the repair of mismatches in DNA. It is possible that it carries out the mismatch recognition step. This protein has a weak ATPase activity. In Maricaulis maris (strain MCS10) (Caulobacter maris), this protein is DNA mismatch repair protein MutS.